The sequence spans 501 residues: Protein disulfide isomerase-like 1-1 (501 aa).

The N-terminal stretch at 1–23 (MAMRGFTLFSILVLSLCASSIRS) is a signal peptide. The region spanning 24–141 (EETETKEFVL…IVTYLKKQSG (118 aa)) is the Thioredoxin 1 domain. N39 is a glycosylation site (N-linked (GlcNAc...) asparagine). Active-site nucleophile residues include C59 and C62. A disulfide bridge connects residues C59 and C62. N-linked (GlcNAc...) asparagine glycosylation is present at N275. The Thioredoxin 2 domain occupies 354–482 (FKDGKIAPHK…FISFVDKNKD (129 aa)). Residues C404 and C407 each act as nucleophile in the active site. A disulfide bridge connects residues C404 and C407. Residues 498–501 (KDEL) carry the Prevents secretion from ER motif.

The protein belongs to the protein disulfide isomerase family. Interacts with RD21A, At3g19390, At5g43060. Highly expressed in flowers, stems and immature seeds, and at lower levels in leaves and siliques (at protein level).

It is found in the endoplasmic reticulum lumen. It localises to the vacuole. The enzyme catalyses Catalyzes the rearrangement of -S-S- bonds in proteins.. In terms of biological role, protein disulfide isomerase that associates with RD21A protease for trafficking from the ER through the Golgi to lytic and protein storage vacuoles of endothelial cells in developing seeds. Regulates the timing of programmed cell death (PCD) of the endothelial cells by chaperoning and inhibiting cysteine proteases during their trafficking to vacuoles. This chain is Protein disulfide isomerase-like 1-1 (PDIL1-1), found in Arabidopsis thaliana (Mouse-ear cress).